The chain runs to 703 residues: Arf-GAP with GTPase, ANK repeat and PH domain-containing protein 9 (703 aa).

Disordered stretches follow at residues 249–287 (KRNGGGSLNNYSSSIPPTPSTSQEDPQFSVPPTANTPTP), 299–323 (FTSEKGSDPDKERKAPENHADTIGS), and 427–449 (SSTTSPKLNPPPSPHANKKKHLK). Positions 271–286 (QEDPQFSVPPTANTPT) are enriched in polar residues. A compositionally biased stretch (basic and acidic residues) spans 303–318 (KGSDPDKERKAPENHA). One can recognise a PH domain in the interval 327-488 (IPIKQGMLLK…WVQAIQSQIL (162 aa)). The Arf-GAP domain occupies 509–629 (AMALQSIQNM…LFLAPLPCTE (121 aa)). The C4-type zinc finger occupies 524 to 547 (CVDCETQNPKWASLNLGVLMCIEC). An ANK repeat occupies 631–700 (SLGQQLLRAT…WTSWPEMPTG (70 aa)).

The protein belongs to the centaurin gamma-like family.

Putative GTPase-activating protein. This Homo sapiens (Human) protein is Arf-GAP with GTPase, ANK repeat and PH domain-containing protein 9 (AGAP9).